The sequence spans 59 residues: Potassium channel toxin alpha-KTx 4.7 (59 aa).

The N-terminal stretch at 1–22 (MKAFYGILIIFILISMLDLSQQ) is a signal peptide. Cystine bridges form between Cys29/Cys50, Cys35/Cys55, and Cys39/Cys57. The interval 48–55 (GKCMNGKC) is interaction with Ca(2+)-activated K(+) channels.

It belongs to the short scorpion toxin superfamily. Potassium channel inhibitor family. Alpha-KTx 04 subfamily. In terms of tissue distribution, expressed by the venom gland.

It is found in the secreted. Its function is as follows. Potently blocks Kv1.1/KCNA1 (85%), Kv1.2/KCNA2 (91%), Kv1.3/KCNA3 (89%), Kv1.6/KCNA6 (94%), and Shaker (97%). In Tityus stigmurus (Brazilian scorpion), this protein is Potassium channel toxin alpha-KTx 4.7.